The following is a 280-amino-acid chain: Putative pyruvate, phosphate dikinase regulatory protein (280 aa).

ADP is bound at residue 154–161; sequence GVSRTSKT.

This sequence belongs to the pyruvate, phosphate/water dikinase regulatory protein family. PDRP subfamily.

The enzyme catalyses N(tele)-phospho-L-histidyl/L-threonyl-[pyruvate, phosphate dikinase] + ADP = N(tele)-phospho-L-histidyl/O-phospho-L-threonyl-[pyruvate, phosphate dikinase] + AMP + H(+). It carries out the reaction N(tele)-phospho-L-histidyl/O-phospho-L-threonyl-[pyruvate, phosphate dikinase] + phosphate + H(+) = N(tele)-phospho-L-histidyl/L-threonyl-[pyruvate, phosphate dikinase] + diphosphate. Functionally, bifunctional serine/threonine kinase and phosphorylase involved in the regulation of the pyruvate, phosphate dikinase (PPDK) by catalyzing its phosphorylation/dephosphorylation. The chain is Putative pyruvate, phosphate dikinase regulatory protein from Nitrobacter hamburgensis (strain DSM 10229 / NCIMB 13809 / X14).